A 212-amino-acid polypeptide reads, in one-letter code: MAEMSNNKTSEEAKANGKKSQSETLEESKLENMNSEESTETTQTESMETAETETSLQTELESAKKEIESLKDSWARERAEFQNFKRRSAQEFVSIRKEAVKSLVSGFLNPIDNLERVGATQTNSEELKPFVDGVTMILKEFYSVLEKSNVIRFDPKGEPFDPMSMEALSSEEGDQYSEETVIDVYQPGYYYKENEDKFTLRPARVRIGKPKS.

The disordered stretch occupies residues 1-69 (MAEMSNNKTS…LESAKKEIES (69 aa)). Residues 40 to 60 (ETTQTESMETAETETSLQTEL) show a composition bias toward low complexity.

This sequence belongs to the GrpE family. Homodimer.

The protein localises to the cytoplasm. Its function is as follows. Participates actively in the response to hyperosmotic and heat shock by preventing the aggregation of stress-denatured proteins, in association with DnaK and GrpE. It is the nucleotide exchange factor for DnaK and may function as a thermosensor. Unfolded proteins bind initially to DnaJ; upon interaction with the DnaJ-bound protein, DnaK hydrolyzes its bound ATP, resulting in the formation of a stable complex. GrpE releases ADP from DnaK; ATP binding to DnaK triggers the release of the substrate protein, thus completing the reaction cycle. Several rounds of ATP-dependent interactions between DnaJ, DnaK and GrpE are required for fully efficient folding. In Leptospira interrogans serogroup Icterohaemorrhagiae serovar Lai (strain 56601), this protein is Protein GrpE.